The sequence spans 114 residues: Probable 4-amino-4-deoxy-L-arabinose-phosphoundecaprenol flippase subunit ArnE (114 aa).

3 consecutive transmembrane segments (helical) span residues 38-58 (LTLR…LLWL), 64-84 (LPLS…TLAA), and 94-114 (LRHW…SWHL). Residues 43 to 112 (LAIAVVSLGL…IMFGILLMSW (70 aa)) form the EamA domain.

Belongs to the ArnE family. Heterodimer of ArnE and ArnF.

The protein resides in the cell inner membrane. It functions in the pathway bacterial outer membrane biogenesis; lipopolysaccharide biosynthesis. Its function is as follows. Translocates 4-amino-4-deoxy-L-arabinose-phosphoundecaprenol (alpha-L-Ara4N-phosphoundecaprenol) from the cytoplasmic to the periplasmic side of the inner membrane. The sequence is that of Probable 4-amino-4-deoxy-L-arabinose-phosphoundecaprenol flippase subunit ArnE from Yersinia pestis bv. Antiqua (strain Antiqua).